A 274-amino-acid chain; its full sequence is N-acetylmuramic acid 6-phosphate etherase (274 aa).

Residues 52 to 215 (IVPRMEQGGR…STSIMIRLGR (164 aa)) form the SIS domain. Catalysis depends on Glu80, which acts as the Proton donor. Residue Glu111 is part of the active site.

This sequence belongs to the GCKR-like family. MurNAc-6-P etherase subfamily. In terms of assembly, homodimer.

It carries out the reaction N-acetyl-D-muramate 6-phosphate + H2O = N-acetyl-D-glucosamine 6-phosphate + (R)-lactate. It participates in amino-sugar metabolism; N-acetylmuramate degradation. Its function is as follows. Specifically catalyzes the cleavage of the D-lactyl ether substituent of MurNAc 6-phosphate, producing GlcNAc 6-phosphate and D-lactate. The chain is N-acetylmuramic acid 6-phosphate etherase from Porphyromonas gingivalis (strain ATCC 33277 / DSM 20709 / CIP 103683 / JCM 12257 / NCTC 11834 / 2561).